Here is a 101-residue protein sequence, read N- to C-terminus: Protein Tat (101 aa).

The interval 1–24 (MEPVDPSLDPWNHPGSQPTTPCTK) is interaction with human CREBBP. The interval 1-48 (MEPVDPSLDPWNHPGSQPTTPCTKCYCKRCCFHCQWCFTTKGLGISYG) is transactivation. 3 residues coordinate Zn(2+): C22, C25, and C27. Positions 22 to 37 (CTKCYCKRCCFHCQWC) are cysteine-rich. Position 28 is an N6-acetyllysine; by host PCAF (K28). Positions 30, 33, 34, and 37 each coordinate Zn(2+). Residues 38-48 (FTTKGLGISYG) are core. The segment covering 48–58 (GRKKRRQRHRT) has biased composition (basic residues). A disordered region spans residues 48–101 (GRKKRRQRHRTPQSSQVHQNSLPKQPLSQARGDPTGPKESKKEVESKAKTDPCA). A Nuclear localization signal, RNA-binding (TAR), and protein transduction motif is present at residues 49 to 57 (RKKRRQRHR). Positions 49-86 (RKKRRQRHRTPQSSQVHQNSLPKQPLSQARGDPTGPKE) are interaction with the host capping enzyme RNGTT. 2 positions are modified to N6-acetyllysine; by host EP300 and GCN5L2: K50 and K51. An asymmetric dimethylarginine; by host PRMT6 mark is found at R52 and R53. The span at 59–75 (PQSSQVHQNSLPKQPLS) shows a compositional bias: polar residues. K71 participates in a covalent cross-link: Glycyl lysine isopeptide (Lys-Gly) (interchain with G-Cter in ubiquitin). The Cell attachment site motif lies at 78–80 (RGD). Residues 83–101 (GPKESKKEVESKAKTDPCA) are compositionally biased toward basic and acidic residues.

The protein belongs to the lentiviruses Tat family. Interacts with host CCNT1. Associates with the P-TEFb complex composed at least of Tat, P-TEFb (CDK9 and CCNT1), TAR RNA, RNA Pol II. Recruits the HATs CREBBP, TAF1/TFIID, EP300, PCAF and GCN5L2. Interacts with host KAT5/Tip60; this interaction targets the latter to degradation. Interacts with the host deacetylase SIRT1. Interacts with host capping enzyme RNGTT; this interaction stimulates RNGTT. Binds to host KDR, and to the host integrins ITGAV/ITGB3 and ITGA5/ITGB1. Interacts with host KPNB1/importin beta-1 without previous binding to KPNA1/importin alpha-1. Interacts with EIF2AK2. Interacts with host nucleosome assembly protein NAP1L1; this interaction may be required for the transport of Tat within the nucleus, since the two proteins interact at the nuclear rim. Interacts with host C1QBP/SF2P32; this interaction involves lysine-acetylated Tat. Interacts with the host chemokine receptors CCR2, CCR3 and CXCR4. Interacts with host DPP4/CD26; this interaction may trigger an anti-proliferative effect. Interacts with host LDLR. Interacts with the host extracellular matrix metalloproteinase MMP1. Interacts with host PRMT6; this interaction mediates Tat's methylation. Interacts with, and is ubiquitinated by MDM2/Hdm2. Interacts with host PSMC3 and HTATIP2. Interacts with STAB1; this interaction may overcome SATB1-mediated repression of IL2 and IL2RA (interleukin) in T cells by binding to the same domain than HDAC1. Interacts (when acetylated) with human CDK13, thereby increasing HIV-1 mRNA splicing and promoting the production of the doubly spliced HIV-1 protein Nef. Interacts with host TBP; this interaction modulates the activity of transcriptional pre-initiation complex. Interacts with host RELA. Interacts with host PLSCR1; this interaction negatively regulates Tat transactivation activity by altering its subcellular distribution. Asymmetrical arginine methylation by host PRMT6 seems to diminish the transactivation capacity of Tat and affects the interaction with host CCNT1. In terms of processing, acetylation by EP300, CREBBP, GCN5L2/GCN5 and PCAF regulates the transactivation activity of Tat. EP300-mediated acetylation of Lys-50 promotes dissociation of Tat from the TAR RNA through the competitive binding to PCAF's bromodomain. In addition, the non-acetylated Tat's N-terminus can also interact with PCAF. PCAF-mediated acetylation of Lys-28 enhances Tat's binding to CCNT1. Lys-50 is deacetylated by SIRT1. Post-translationally, polyubiquitination by host MDM2 does not target Tat to degradation, but activates its transactivation function and fosters interaction with CCNT1 and TAR RNA. Phosphorylated by EIF2AK2 on serine and threonine residues adjacent to the basic region important for TAR RNA binding and function. Phosphorylation of Tat by EIF2AK2 is dependent on the prior activation of EIF2AK2 by dsRNA.

The protein localises to the host nucleus. It is found in the host nucleolus. Its subcellular location is the host cytoplasm. The protein resides in the secreted. Its function is as follows. Transcriptional activator that increases RNA Pol II processivity, thereby increasing the level of full-length viral transcripts. Recognizes a hairpin structure at the 5'-LTR of the nascent viral mRNAs referred to as the transactivation responsive RNA element (TAR) and recruits the cyclin T1-CDK9 complex (P-TEFb complex) that will in turn hyperphosphorylate the RNA polymerase II to allow efficient elongation. The CDK9 component of P-TEFb and other Tat-activated kinases hyperphosphorylate the C-terminus of RNA Pol II that becomes stabilized and much more processive. Other factors such as HTATSF1/Tat-SF1, SUPT5H/SPT5, and HTATIP2 are also important for Tat's function. Besides its effect on RNA Pol II processivity, Tat induces chromatin remodeling of proviral genes by recruiting the histone acetyltransferases (HATs) CREBBP, EP300 and PCAF to the chromatin. This also contributes to the increase in proviral transcription rate, especially when the provirus integrates in transcriptionally silent region of the host genome. To ensure maximal activation of the LTR, Tat mediates nuclear translocation of NF-kappa-B by interacting with host RELA. Through its interaction with host TBP, Tat may also modulate transcription initiation. Tat can reactivate a latently infected cell by penetrating in it and transactivating its LTR promoter. In the cytoplasm, Tat is thought to act as a translational activator of HIV-1 mRNAs. Functionally, extracellular circulating Tat can be endocytosed by surrounding uninfected cells via the binding to several surface receptors such as CD26, CXCR4, heparan sulfate proteoglycans (HSPG) or LDLR. Neurons are rarely infected, but they internalize Tat via their LDLR. Through its interaction with nuclear HATs, Tat is potentially able to control the acetylation-dependent cellular gene expression. Modulates the expression of many cellular genes involved in cell survival, proliferation or in coding for cytokines or cytokine receptors. Tat plays a role in T-cell and neurons apoptosis. Tat induced neurotoxicity and apoptosis probably contribute to neuroAIDS. Circulating Tat also acts as a chemokine-like and/or growth factor-like molecule that binds to specific receptors on the surface of the cells, affecting many cellular pathways. In the vascular system, Tat binds to ITGAV/ITGB3 and ITGA5/ITGB1 integrins dimers at the surface of endothelial cells and competes with bFGF for heparin-binding sites, leading to an excess of soluble bFGF. In Human immunodeficiency virus type 1 group M subtype F1 (isolate VI850) (HIV-1), this protein is Protein Tat.